Here is a 333-residue protein sequence, read N- to C-terminus: MFYDDNADLSIIQRRKVGVIGYGSQGYAHSLSLRDSGVQVRVGLPEGSKSRPKAFEQGLDVDTPAEVAKWADVIMLLVPDTAQADVFENDIEPNLQPGDALFFGHGLNIHFELVKPSGDVTVAMVAPKGPGYLVRRQFVDGKGVPCLIAVNQDPTGTGEALALSYAKAIGGTRAGVIKTTFKDETETDLFGEQAVLCGGTEELVKAGFDVMVEAGYPPEMAYFEVLHELKLIVDLMYEGGIARMNYSVSDTAEFGGYLSGPRVIDADTKERMRGILRDIQDGSFVKKLVANVEGGNKQLEVLRKENAEHPIEVTGKKLRDLMSWVDRQSTETA.

The 179-residue stretch at 1–179 (MFYDDNADLS…GGTRAGVIKT (179 aa)) folds into the KARI N-terminal Rossmann domain. Residues 22 to 25 (YGSQ), S48, S50, and 80 to 83 (DTAQ) contribute to the NADP(+) site. The active site involves H105. G131 contacts NADP(+). One can recognise a KARI C-terminal knotted domain in the interval 180 to 325 (TFKDETETDL…KKLRDLMSWV (146 aa)). 4 residues coordinate Mg(2+): D188, E192, E224, and E228. S249 is a substrate binding site.

Belongs to the ketol-acid reductoisomerase family. Mg(2+) is required as a cofactor.

It carries out the reaction (2R)-2,3-dihydroxy-3-methylbutanoate + NADP(+) = (2S)-2-acetolactate + NADPH + H(+). The catalysed reaction is (2R,3R)-2,3-dihydroxy-3-methylpentanoate + NADP(+) = (S)-2-ethyl-2-hydroxy-3-oxobutanoate + NADPH + H(+). It participates in amino-acid biosynthesis; L-isoleucine biosynthesis; L-isoleucine from 2-oxobutanoate: step 2/4. It functions in the pathway amino-acid biosynthesis; L-valine biosynthesis; L-valine from pyruvate: step 2/4. Involved in the biosynthesis of branched-chain amino acids (BCAA). Catalyzes an alkyl-migration followed by a ketol-acid reduction of (S)-2-acetolactate (S2AL) to yield (R)-2,3-dihydroxy-isovalerate. In the isomerase reaction, S2AL is rearranged via a Mg-dependent methyl migration to produce 3-hydroxy-3-methyl-2-ketobutyrate (HMKB). In the reductase reaction, this 2-ketoacid undergoes a metal-dependent reduction by NADPH to yield (R)-2,3-dihydroxy-isovalerate. This chain is Ketol-acid reductoisomerase (NADP(+)), found in Mycobacterium leprae (strain TN).